Here is a 417-residue protein sequence, read N- to C-terminus: NADH-quinone oxidoreductase subunit D (417 aa).

Belongs to the complex I 49 kDa subunit family. As to quaternary structure, NDH-1 is composed of 14 different subunits. Subunits NuoB, C, D, E, F, and G constitute the peripheral sector of the complex.

The protein resides in the cell inner membrane. It carries out the reaction a quinone + NADH + 5 H(+)(in) = a quinol + NAD(+) + 4 H(+)(out). Its function is as follows. NDH-1 shuttles electrons from NADH, via FMN and iron-sulfur (Fe-S) centers, to quinones in the respiratory chain. The immediate electron acceptor for the enzyme in this species is believed to be ubiquinone. Couples the redox reaction to proton translocation (for every two electrons transferred, four hydrogen ions are translocated across the cytoplasmic membrane), and thus conserves the redox energy in a proton gradient. The sequence is that of NADH-quinone oxidoreductase subunit D from Burkholderia vietnamiensis (strain G4 / LMG 22486) (Burkholderia cepacia (strain R1808)).